A 169-amino-acid polypeptide reads, in one-letter code: Centrosomal protein 20 (169 aa).

A necessary and sufficient for homooligomerization and localization to centrosomes and pericentriolar satellites region spans residues 1–104 (MATVGDLKAV…VVEDLNSQSV (104 aa)). Positions 49–81 (ENLLINELIREYLAFNKYSYTSSVLTAETGLSE) constitute a LisH domain. A disordered region spans residues 135 to 169 (TFRNIPRGRNTKDTHSGPVQLTQTSTEDWHQRRHR). Residues 151 to 160 (GPVQLTQTST) show a composition bias toward polar residues.

This sequence belongs to the CEP43 family. Homooligomer; probably required for localization to centrosomes.

It localises to the cell projection. The protein localises to the cilium. Its subcellular location is the cytoplasm. The protein resides in the cytoskeleton. It is found in the cilium basal body. It localises to the microtubule organizing center. The protein localises to the centrosome. Its subcellular location is the cytoplasmic granule. The protein resides in the centriolar satellite. In terms of biological role, involved in the biogenesis of cilia. Required for the recruitment of PLK1 to centrosomes and S phase progression. The chain is Centrosomal protein 20 (Cep20) from Xenopus laevis (African clawed frog).